The chain runs to 239 residues: tRNA (guanine-N(1)-)-methyltransferase (239 aa).

Residues glycine 108 and 127-132 (LGDFVL) contribute to the S-adenosyl-L-methionine site.

It belongs to the RNA methyltransferase TrmD family. Homodimer.

It is found in the cytoplasm. The enzyme catalyses guanosine(37) in tRNA + S-adenosyl-L-methionine = N(1)-methylguanosine(37) in tRNA + S-adenosyl-L-homocysteine + H(+). In terms of biological role, specifically methylates guanosine-37 in various tRNAs. This chain is tRNA (guanine-N(1)-)-methyltransferase, found in Streptococcus thermophilus (strain CNRZ 1066).